The primary structure comprises 775 residues: 1,4-alpha-glucan branching enzyme GlgB (775 aa).

Catalysis depends on D431, which acts as the Nucleophile. The active-site Proton donor is E484.

This sequence belongs to the glycosyl hydrolase 13 family. GlgB subfamily. In terms of assembly, monomer.

It catalyses the reaction Transfers a segment of a (1-&gt;4)-alpha-D-glucan chain to a primary hydroxy group in a similar glucan chain.. The protein operates within glycan biosynthesis; glycogen biosynthesis. Catalyzes the formation of the alpha-1,6-glucosidic linkages in glycogen by scission of a 1,4-alpha-linked oligosaccharide from growing alpha-1,4-glucan chains and the subsequent attachment of the oligosaccharide to the alpha-1,6 position. The chain is 1,4-alpha-glucan branching enzyme GlgB from Parasynechococcus marenigrum (strain WH8102).